The primary structure comprises 433 residues: Pyrimidine-nucleoside phosphorylase (433 aa).

Position 81 to 83 (81 to 83) interacts with phosphate; the sequence is KHS. K(+)-binding residues include G88 and T90. Phosphate-binding positions include T92, 108-110, and T120; that span reads KMS. Residues R168 and K187 each contribute to the substrate site. Positions 243, 246, and 255 each coordinate K(+).

The protein belongs to the thymidine/pyrimidine-nucleoside phosphorylase family. As to quaternary structure, homodimer. K(+) is required as a cofactor.

It carries out the reaction uridine + phosphate = alpha-D-ribose 1-phosphate + uracil. The catalysed reaction is thymidine + phosphate = 2-deoxy-alpha-D-ribose 1-phosphate + thymine. The enzyme catalyses 2'-deoxyuridine + phosphate = 2-deoxy-alpha-D-ribose 1-phosphate + uracil. Its function is as follows. Catalyzes phosphorolysis of the pyrimidine nucleosides uridine, thymidine and 2'-deoxyuridine with the formation of the corresponding pyrimidine base and ribose-1-phosphate. This Bacillus subtilis (strain 168) protein is Pyrimidine-nucleoside phosphorylase.